A 1167-amino-acid chain; its full sequence is Tight junction protein 2 (1167 aa).

The PDZ 1 domain maps to 10-97 (TVTLQKDSKR…IAAIVVKRPR (88 aa)). Phosphoserine occurs at positions 107, 127, 130, 140, 145, 147, 173, 194, 205, and 239. The interval 129–195 (RSGYSERSRH…SRERSRGRSL (67 aa)) is disordered. Residues 225–286 (SYHEAYEPDY…KGQHDPDRPI (62 aa)) are disordered. Residues 242 to 262 (YDRRAHPETRYERSRSREHLR) show a composition bias toward basic and acidic residues. The region spanning 287 to 365 (GVLLTKSKAN…KLQLVVLRDS (79 aa)) is the PDZ 2 domain. A phosphoserine mark is found at S305, S378, S380, S386, S395, S404, S410, and S411. The interval 381 to 485 (EVEDISEIES…LRPSPEDEAI (105 aa)) is disordered. Over residues 395 to 426 (SPEERRQQYSDQDYHSSTEKLKERPSSREETS) the composition is skewed to basic and acidic residues. T435 bears the Phosphothreonine mark. At S479 the chain carries Phosphoserine. The PDZ 3 domain maps to 489-570 (NTKMVRFKKG…GETVTILAQS (82 aa)). Position 554 is a phosphotyrosine (Y554). Residues 584 to 649 (GDSFFIRSHF…PNKSRAEQMA (66 aa)) enclose the SH3 domain. The Guanylate kinase-like domain maps to 660–858 (GDRADFWRMR…WFGSLKDSIQ (199 aa)). Phosphoserine occurs at positions 684 and 884. At T887 the chain carries Phosphothreonine. S895 and S902 each carry phosphoserine. 2 disordered regions span residues 904–1055 (FEDT…PRSV) and 1095–1167 (YAVP…DTEL). Phosphothreonine is present on residues T907 and T915. Over residues 938 to 949 (VQHEENIRKSSP) the composition is skewed to basic and acidic residues. A phosphoserine mark is found at S948, S960, S968, S988, and S1044. Residues 976-990 (EPPKARSQNREDSFD) are compositionally biased toward basic and acidic residues. Over residues 1037-1049 (ESEEVGESTEEQE) the composition is skewed to acidic residues. A Phosphotyrosine modification is found at Y1095. 2 positions are modified to phosphoserine: S1124 and S1136. The interval 1165–1167 (TEL) is interaction with SCRIB.

The protein belongs to the MAGUK family. In terms of assembly, homodimer. Interacts (via PDZ2 domain) with TJP1/ZO1 (via PDZ2 domain). Interacts with UBN1. Interacts with SCRIB. Interacts with OCLN. Interacts with SAFB in the nucleus. Interacts with USP53 (via the C-terminal region). Interacts with claudins, including CLDN1, CLDN2, CLDN3, CLDN5 and CLDN7. Interacts with CLDN18. Interacts (via N-terminus) with CTNNA1.

Its subcellular location is the cell junction. The protein resides in the adherens junction. The protein localises to the cell membrane. It is found in the nucleus. It localises to the tight junction. In terms of biological role, plays a role in tight junctions and adherens junctions. Acts as a positive regulator of RANKL-induced osteoclast differentiation, potentially via mediating downstream transcriptional activity. The protein is Tight junction protein 2 of Mus musculus (Mouse).